The primary structure comprises 203 residues: MPQTPSTRWCPTPEQLMILEEMYRSGVRTPNAAEIQQITAHLAYYGRIEGKNVFYWFQNHKARERQRLRRRLCARHQQQPSPPSSTVPPAPTAAAAGAVVQVHPAVMQLHHHHHHHHPYAAAAAAQSHHLQQQQQQQAEWPAAVDYCSTASASASATAADMAIPPCCRPLKTLELFPTKSTSGGLKEDCCSSSKSSSCSTSTN.

The homeobox; WUS-type DNA-binding region spans 4 to 68 (TPSTRWCPTP…NHKARERQRL (65 aa)). Disordered stretches follow at residues 73 to 95 (CARH…TAAA), 109 to 135 (LHHH…QQQQ), and 180 to 203 (STSG…TSTN). Over residues 80 to 91 (PSPPSSTVPPAP) the composition is skewed to pro residues. Basic residues predominate over residues 109 to 118 (LHHHHHHHHP). Low complexity-rich tracts occupy residues 119–135 (YAAA…QQQQ) and 190–203 (CSSS…TSTN).

The protein belongs to the WUS homeobox family.

The protein localises to the nucleus. Transcription factor which may be involved in developmental processes. The chain is WUSCHEL-related homeobox 3 (WOX3) from Oryza sativa subsp. indica (Rice).